We begin with the raw amino-acid sequence, 305 residues long: UDP-3-O-acyl-N-acetylglucosamine deacetylase (305 aa).

Zn(2+) is bound by residues H78, H237, and D241. H264 functions as the Proton donor in the catalytic mechanism.

This sequence belongs to the LpxC family. Requires Zn(2+) as cofactor.

The enzyme catalyses a UDP-3-O-[(3R)-3-hydroxyacyl]-N-acetyl-alpha-D-glucosamine + H2O = a UDP-3-O-[(3R)-3-hydroxyacyl]-alpha-D-glucosamine + acetate. It functions in the pathway glycolipid biosynthesis; lipid IV(A) biosynthesis; lipid IV(A) from (3R)-3-hydroxytetradecanoyl-[acyl-carrier-protein] and UDP-N-acetyl-alpha-D-glucosamine: step 2/6. Functionally, catalyzes the hydrolysis of UDP-3-O-myristoyl-N-acetylglucosamine to form UDP-3-O-myristoylglucosamine and acetate, the committed step in lipid A biosynthesis. This Burkholderia multivorans (strain ATCC 17616 / 249) protein is UDP-3-O-acyl-N-acetylglucosamine deacetylase.